We begin with the raw amino-acid sequence, 227 residues long: Enolase-phosphatase E1 (227 aa).

The Mg(2+) site is built by aspartate 11 and glutamate 13. Residues 118–119 and lysine 161 contribute to the substrate site; that span reads SS. Aspartate 186 provides a ligand contact to Mg(2+).

It belongs to the HAD-like hydrolase superfamily. MasA/MtnC family. In terms of assembly, monomer. Requires Mg(2+) as cofactor.

It localises to the cytoplasm. It is found in the nucleus. The enzyme catalyses 5-methylsulfanyl-2,3-dioxopentyl phosphate + H2O = 1,2-dihydroxy-5-(methylsulfanyl)pent-1-en-3-one + phosphate. It participates in amino-acid biosynthesis; L-methionine biosynthesis via salvage pathway; L-methionine from S-methyl-5-thio-alpha-D-ribose 1-phosphate: step 3/6. It functions in the pathway amino-acid biosynthesis; L-methionine biosynthesis via salvage pathway; L-methionine from S-methyl-5-thio-alpha-D-ribose 1-phosphate: step 4/6. Its function is as follows. Bifunctional enzyme that catalyzes the enolization of 2,3-diketo-5-methylthiopentyl-1-phosphate (DK-MTP-1-P) into the intermediate 2-hydroxy-3-keto-5-methylthiopentenyl-1-phosphate (HK-MTPenyl-1-P), which is then dephosphorylated to form the acireductone 1,2-dihydroxy-3-keto-5-methylthiopentene (DHK-MTPene). The protein is Enolase-phosphatase E1 of Saccharomyces cerevisiae (strain JAY291) (Baker's yeast).